The primary structure comprises 319 residues: Tryptophan--tRNA ligase (319 aa).

ATP contacts are provided by residues 8-10 and 16-17; these read QPS and GN. The short motif at 9-17 is the 'HIGH' region element; it reads PSGDLHIGN. Aspartate 131 contributes to the L-tryptophan binding site. ATP is bound by residues 143–145, valine 182, and 189–193; these read GKD and KMSKS. The short motif at 189-193 is the 'KMSKS' region element; that stretch reads KMSKS.

It belongs to the class-I aminoacyl-tRNA synthetase family. In terms of assembly, homodimer.

It localises to the cytoplasm. It catalyses the reaction tRNA(Trp) + L-tryptophan + ATP = L-tryptophyl-tRNA(Trp) + AMP + diphosphate + H(+). Catalyzes the attachment of tryptophan to tRNA(Trp). This is Tryptophan--tRNA ligase from Campylobacter jejuni subsp. jejuni serotype O:2 (strain ATCC 700819 / NCTC 11168).